Here is a 1185-residue protein sequence, read N- to C-terminus: Liprin-alpha-4 (1185 aa).

2 coiled-coil regions span residues 24–123 and 165–499; these read ANFE…CLVS and DEKV…GRGG. 2 disordered regions span residues 638 to 709 and 721 to 757; these read SASP…RTLR and EEGK…KSSI. S640 bears the Phosphoserine mark. The segment covering 645-656 has biased composition (polar residues); that stretch reads GRSTPKLTSRSA. S681 is subject to Phosphoserine. Residues 684–695 are compositionally biased toward basic and acidic residues; the sequence is SREENREDKATI. Over residues 729-742 the composition is skewed to low complexity; it reads DQGSNPSSSNSSQD. SAM domains are found at residues 829–895, 944–1008, and 1032–1101; these read WDGP…MVSL, NHEW…LKRL, and WTND…LLAL.

It belongs to the liprin family. Liprin-alpha subfamily. As to quaternary structure, forms homodimers and heterodimers with liprins-alpha and liprins-beta. Interacts with the second PTPase domain of PTPRD, PTPRF and PTPRS. Interacts with RIMS1 and RIMS2. Interacts with GIT1 and GIT2. Interacts with GRIP1. Interacts with KIF1A. In terms of tissue distribution, expressed only in the heart, brain, and skeletal muscle.

Its subcellular location is the cytoplasm. It is found in the cell surface. Its function is as follows. May regulate the disassembly of focal adhesions. May localize receptor-like tyrosine phosphatases type 2A at specific sites on the plasma membrane, possibly regulating their interaction with the extracellular environment and their association with substrates. The chain is Liprin-alpha-4 (PPFIA4) from Homo sapiens (Human).